A 207-amino-acid polypeptide reads, in one-letter code: NADH-quinone oxidoreductase subunit C (207 aa).

This sequence belongs to the complex I 30 kDa subunit family. In terms of assembly, NDH-1 is composed of 14 different subunits. Subunits NuoB, C, D, E, F, and G constitute the peripheral sector of the complex.

Its subcellular location is the cell inner membrane. The catalysed reaction is a quinone + NADH + 5 H(+)(in) = a quinol + NAD(+) + 4 H(+)(out). Functionally, NDH-1 shuttles electrons from NADH, via FMN and iron-sulfur (Fe-S) centers, to quinones in the respiratory chain. The immediate electron acceptor for the enzyme in this species is believed to be ubiquinone. Couples the redox reaction to proton translocation (for every two electrons transferred, four hydrogen ions are translocated across the cytoplasmic membrane), and thus conserves the redox energy in a proton gradient. This Jannaschia sp. (strain CCS1) protein is NADH-quinone oxidoreductase subunit C.